We begin with the raw amino-acid sequence, 458 residues long: UDP-N-acetylmuramate--L-alanine ligase (458 aa).

An ATP-binding site is contributed by 115-121; that stretch reads GSHGKTT.

It belongs to the MurCDEF family.

The protein localises to the cytoplasm. The catalysed reaction is UDP-N-acetyl-alpha-D-muramate + L-alanine + ATP = UDP-N-acetyl-alpha-D-muramoyl-L-alanine + ADP + phosphate + H(+). It participates in cell wall biogenesis; peptidoglycan biosynthesis. Cell wall formation. This Anaeromyxobacter dehalogenans (strain 2CP-C) protein is UDP-N-acetylmuramate--L-alanine ligase.